Reading from the N-terminus, the 572-residue chain is Proline--tRNA ligase (572 aa).

It belongs to the class-II aminoacyl-tRNA synthetase family. ProS type 1 subfamily. As to quaternary structure, homodimer.

The protein localises to the cytoplasm. The enzyme catalyses tRNA(Pro) + L-proline + ATP = L-prolyl-tRNA(Pro) + AMP + diphosphate. Catalyzes the attachment of proline to tRNA(Pro) in a two-step reaction: proline is first activated by ATP to form Pro-AMP and then transferred to the acceptor end of tRNA(Pro). As ProRS can inadvertently accommodate and process non-cognate amino acids such as alanine and cysteine, to avoid such errors it has two additional distinct editing activities against alanine. One activity is designated as 'pretransfer' editing and involves the tRNA(Pro)-independent hydrolysis of activated Ala-AMP. The other activity is designated 'posttransfer' editing and involves deacylation of mischarged Ala-tRNA(Pro). The misacylated Cys-tRNA(Pro) is not edited by ProRS. This chain is Proline--tRNA ligase, found in Yersinia pestis bv. Antiqua (strain Antiqua).